Consider the following 930-residue polypeptide: Protein translocase subunit SecA (930 aa).

Residues Gln87, 105 to 109, and Asp515 contribute to the ATP site; that span reads GEGKT. Positions 914, 916, 925, and 926 each coordinate Zn(2+).

The protein belongs to the SecA family. In terms of assembly, monomer and homodimer. Part of the essential Sec protein translocation apparatus which comprises SecA, SecYEG and auxiliary proteins SecDF-YajC and YidC. Zn(2+) serves as cofactor.

It localises to the cell inner membrane. Its subcellular location is the cytoplasm. It carries out the reaction ATP + H2O + cellular proteinSide 1 = ADP + phosphate + cellular proteinSide 2.. Its function is as follows. Part of the Sec protein translocase complex. Interacts with the SecYEG preprotein conducting channel. Has a central role in coupling the hydrolysis of ATP to the transfer of proteins into and across the cell membrane, serving both as a receptor for the preprotein-SecB complex and as an ATP-driven molecular motor driving the stepwise translocation of polypeptide chains across the membrane. This is Protein translocase subunit SecA from Burkholderia thailandensis (strain ATCC 700388 / DSM 13276 / CCUG 48851 / CIP 106301 / E264).